Here is a 367-residue protein sequence, read N- to C-terminus: Putative F-box protein At3g21130 (367 aa).

In terms of domain architecture, F-box spans 4–50 (KRNTVYLSEDLIVEILSRVSAVSLARLRTTSKRWNALVKDERLAKKH).

The chain is Putative F-box protein At3g21130 from Arabidopsis thaliana (Mouse-ear cress).